A 341-amino-acid polypeptide reads, in one-letter code: Tetraacyldisaccharide 4'-kinase (341 aa).

An ATP-binding site is contributed by 57-64 (TVGGTGKT).

This sequence belongs to the LpxK family.

It catalyses the reaction a lipid A disaccharide + ATP = a lipid IVA + ADP + H(+). The protein operates within glycolipid biosynthesis; lipid IV(A) biosynthesis; lipid IV(A) from (3R)-3-hydroxytetradecanoyl-[acyl-carrier-protein] and UDP-N-acetyl-alpha-D-glucosamine: step 6/6. Functionally, transfers the gamma-phosphate of ATP to the 4'-position of a tetraacyldisaccharide 1-phosphate intermediate (termed DS-1-P) to form tetraacyldisaccharide 1,4'-bis-phosphate (lipid IVA). The sequence is that of Tetraacyldisaccharide 4'-kinase from Maricaulis maris (strain MCS10) (Caulobacter maris).